Here is a 171-residue protein sequence, read N- to C-terminus: ATP synthase subunit b (171 aa).

A helical membrane pass occupies residues 14-34 (LGDMLFIGISFIVLMALISVV). The span at 56–97 (SAQKSRQEASDLADQRRDALSHSRAEASEIVADAKKSGEKQR) shows a compositional bias: basic and acidic residues. The interval 56 to 104 (SAQKSRQEASDLADQRRDALSHSRAEASEIVADAKKSGEKQRSSIVADA) is disordered.

The protein belongs to the ATPase B chain family. In terms of assembly, F-type ATPases have 2 components, F(1) - the catalytic core - and F(0) - the membrane proton channel. F(1) has five subunits: alpha(3), beta(3), gamma(1), delta(1), epsilon(1). F(0) has three main subunits: a(1), b(2) and c(10-14). The alpha and beta chains form an alternating ring which encloses part of the gamma chain. F(1) is attached to F(0) by a central stalk formed by the gamma and epsilon chains, while a peripheral stalk is formed by the delta and b chains.

The protein resides in the cell membrane. In terms of biological role, f(1)F(0) ATP synthase produces ATP from ADP in the presence of a proton or sodium gradient. F-type ATPases consist of two structural domains, F(1) containing the extramembraneous catalytic core and F(0) containing the membrane proton channel, linked together by a central stalk and a peripheral stalk. During catalysis, ATP synthesis in the catalytic domain of F(1) is coupled via a rotary mechanism of the central stalk subunits to proton translocation. Its function is as follows. Component of the F(0) channel, it forms part of the peripheral stalk, linking F(1) to F(0). This Lactiplantibacillus plantarum (strain ATCC BAA-793 / NCIMB 8826 / WCFS1) (Lactobacillus plantarum) protein is ATP synthase subunit b.